Reading from the N-terminus, the 405-residue chain is Glucose-1-phosphate adenylyltransferase (405 aa).

Alpha-D-glucose 1-phosphate-binding positions include Tyr-96, Gly-161, 176 to 177 (EK), and Ser-194.

Belongs to the bacterial/plant glucose-1-phosphate adenylyltransferase family. Homotetramer.

It carries out the reaction alpha-D-glucose 1-phosphate + ATP + H(+) = ADP-alpha-D-glucose + diphosphate. It participates in glycan biosynthesis; glycogen biosynthesis. Functionally, involved in the biosynthesis of ADP-glucose, a building block required for the elongation reactions to produce glycogen. Catalyzes the reaction between ATP and alpha-D-glucose 1-phosphate (G1P) to produce pyrophosphate and ADP-Glc. This Aliivibrio fischeri (strain ATCC 700601 / ES114) (Vibrio fischeri) protein is Glucose-1-phosphate adenylyltransferase.